Here is a 189-residue protein sequence, read N- to C-terminus: GTP cyclohydrolase 1 (189 aa).

Residues Cys78, His81, and Cys150 each coordinate Zn(2+).

The protein belongs to the GTP cyclohydrolase I family. As to quaternary structure, toroid-shaped homodecamer, composed of two pentamers of five dimers.

The catalysed reaction is GTP + H2O = 7,8-dihydroneopterin 3'-triphosphate + formate + H(+). The protein operates within cofactor biosynthesis; 7,8-dihydroneopterin triphosphate biosynthesis; 7,8-dihydroneopterin triphosphate from GTP: step 1/1. The sequence is that of GTP cyclohydrolase 1 from Listeria welshimeri serovar 6b (strain ATCC 35897 / DSM 20650 / CCUG 15529 / CIP 8149 / NCTC 11857 / SLCC 5334 / V8).